A 289-amino-acid polypeptide reads, in one-letter code: Probable WRKY transcription factor 38 (289 aa).

Positions 62–103 (PETEDDQFSDLSSRDSSPPPQGSPSKKRKIDSTNSSENWRDD) are disordered. Residues 104–172 (SPDPIYYDGY…YFGHHTCKTE (69 aa)) constitute a DNA-binding region (WRKY). Positions 249–266 (LSSPSGSYPPSSSSGSES) are enriched in low complexity. The interval 249 to 278 (LSSPSGSYPPSSSSGSESADFNSDLLFDNP) is disordered.

Belongs to the WRKY group III family.

It localises to the nucleus. Transcription factor. Interacts specifically with the W box (5'-(T)TGAC[CT]-3'), a frequently occurring elicitor-responsive cis-acting element. The polypeptide is Probable WRKY transcription factor 38 (WRKY38) (Arabidopsis thaliana (Mouse-ear cress)).